Reading from the N-terminus, the 215-residue chain is Large ribosomal subunit protein uL3 (215 aa).

Gln-151 is subject to N5-methylglutamine.

It belongs to the universal ribosomal protein uL3 family. Part of the 50S ribosomal subunit. Forms a cluster with proteins L14 and L19. In terms of processing, methylated by PrmB.

In terms of biological role, one of the primary rRNA binding proteins, it binds directly near the 3'-end of the 23S rRNA, where it nucleates assembly of the 50S subunit. In Rickettsia bellii (strain OSU 85-389), this protein is Large ribosomal subunit protein uL3.